The sequence spans 308 residues: Aspartate carbamoyltransferase catalytic subunit (308 aa).

Residues Arg51 and Thr52 each contribute to the carbamoyl phosphate site. L-aspartate is bound at residue Lys79. Residues Arg101, His130, and Gln133 each coordinate carbamoyl phosphate. Residues Arg163 and Arg215 each coordinate L-aspartate. Residues Ala258 and Pro259 each coordinate carbamoyl phosphate.

It belongs to the aspartate/ornithine carbamoyltransferase superfamily. ATCase family. As to quaternary structure, heterododecamer (2C3:3R2) of six catalytic PyrB chains organized as two trimers (C3), and six regulatory PyrI chains organized as three dimers (R2).

It catalyses the reaction carbamoyl phosphate + L-aspartate = N-carbamoyl-L-aspartate + phosphate + H(+). Its pathway is pyrimidine metabolism; UMP biosynthesis via de novo pathway; (S)-dihydroorotate from bicarbonate: step 2/3. In terms of biological role, catalyzes the condensation of carbamoyl phosphate and aspartate to form carbamoyl aspartate and inorganic phosphate, the committed step in the de novo pyrimidine nucleotide biosynthesis pathway. This is Aspartate carbamoyltransferase catalytic subunit from Pediococcus pentosaceus (strain ATCC 25745 / CCUG 21536 / LMG 10740 / 183-1w).